A 132-amino-acid chain; its full sequence is Small ribosomal subunit protein uS8 (132 aa).

This sequence belongs to the universal ribosomal protein uS8 family. Part of the 30S ribosomal subunit. Contacts proteins S5 and S12.

Its function is as follows. One of the primary rRNA binding proteins, it binds directly to 16S rRNA central domain where it helps coordinate assembly of the platform of the 30S subunit. The protein is Small ribosomal subunit protein uS8 of Methylocella silvestris (strain DSM 15510 / CIP 108128 / LMG 27833 / NCIMB 13906 / BL2).